Reading from the N-terminus, the 488-residue chain is Bifunctional protein HldE (488 aa).

Residues 1–327 are ribokinase; the sequence is MDDTLAKLPR…GLAHGEHADP (327 aa). Residue 201–204 coordinates ATP; sequence NRRE. Residue Asp272 is part of the active site. A cytidylyltransferase region spans residues 354–488; it reads FTNGCFDLLH…GRMNAPAVGG (135 aa).

It in the N-terminal section; belongs to the carbohydrate kinase PfkB family. This sequence in the C-terminal section; belongs to the cytidylyltransferase family. Homodimer.

The enzyme catalyses D-glycero-beta-D-manno-heptose 7-phosphate + ATP = D-glycero-beta-D-manno-heptose 1,7-bisphosphate + ADP + H(+). The catalysed reaction is D-glycero-beta-D-manno-heptose 1-phosphate + ATP + H(+) = ADP-D-glycero-beta-D-manno-heptose + diphosphate. Its pathway is nucleotide-sugar biosynthesis; ADP-L-glycero-beta-D-manno-heptose biosynthesis; ADP-L-glycero-beta-D-manno-heptose from D-glycero-beta-D-manno-heptose 7-phosphate: step 1/4. The protein operates within nucleotide-sugar biosynthesis; ADP-L-glycero-beta-D-manno-heptose biosynthesis; ADP-L-glycero-beta-D-manno-heptose from D-glycero-beta-D-manno-heptose 7-phosphate: step 3/4. Catalyzes the phosphorylation of D-glycero-D-manno-heptose 7-phosphate at the C-1 position to selectively form D-glycero-beta-D-manno-heptose-1,7-bisphosphate. Functionally, catalyzes the ADP transfer from ATP to D-glycero-beta-D-manno-heptose 1-phosphate, yielding ADP-D-glycero-beta-D-manno-heptose. The chain is Bifunctional protein HldE from Caulobacter sp. (strain K31).